Here is a 95-residue protein sequence, read N- to C-terminus: Co-chaperonin GroES (95 aa).

Residues 20–45 form a disordered region; the sequence is KTKGGLIIPDSAKEKPAEGEITSVGE.

It belongs to the GroES chaperonin family. As to quaternary structure, heptamer of 7 subunits arranged in a ring. Interacts with the chaperonin GroEL.

The protein resides in the cytoplasm. Its function is as follows. Together with the chaperonin GroEL, plays an essential role in assisting protein folding. The GroEL-GroES system forms a nano-cage that allows encapsulation of the non-native substrate proteins and provides a physical environment optimized to promote and accelerate protein folding. GroES binds to the apical surface of the GroEL ring, thereby capping the opening of the GroEL channel. This is Co-chaperonin GroES from Paracoccus denitrificans.